Reading from the N-terminus, the 291-residue chain is Ribosomal RNA small subunit methyltransferase A (291 aa).

6 residues coordinate S-adenosyl-L-methionine: His37, Leu39, Gly64, Glu85, Asp110, and Asn131.

The protein belongs to the class I-like SAM-binding methyltransferase superfamily. rRNA adenine N(6)-methyltransferase family. RsmA subfamily.

The protein localises to the cytoplasm. It carries out the reaction adenosine(1518)/adenosine(1519) in 16S rRNA + 4 S-adenosyl-L-methionine = N(6)-dimethyladenosine(1518)/N(6)-dimethyladenosine(1519) in 16S rRNA + 4 S-adenosyl-L-homocysteine + 4 H(+). Functionally, specifically dimethylates two adjacent adenosines (A1518 and A1519) in the loop of a conserved hairpin near the 3'-end of 16S rRNA in the 30S particle. May play a critical role in biogenesis of 30S subunits. The polypeptide is Ribosomal RNA small subunit methyltransferase A (Dehalococcoides mccartyi (strain ATCC BAA-2266 / KCTC 15142 / 195) (Dehalococcoides ethenogenes (strain 195))).